The primary structure comprises 1013 residues: Chitin synthase A (1013 aa).

N-linked (GlcNAc...) asparagine glycosylation is present at Asn-10. Disordered regions lie at residues 26-83 (RYSY…AADW) and 95-218 (ERAD…RRGV). Over residues 64 to 81 (TASRPASPARPWSPTRAA) the composition is skewed to low complexity. A compositionally biased stretch (polar residues) spans 154–173 (TISSRHGPQGSVQSFTSEST). 2 N-linked (GlcNAc...) asparagine glycosylation sites follow: Asn-194 and Asn-316. A run of 5 helical transmembrane segments spans residues 646-666 (LLQLIFTYFGLANFYLAFFFI), 686-706 (IFIVLRYACVLVMCLQFIFSM), 721-741 (MIVYSIVMAYTAFCTLYLIVL), 759-779 (LFVNIVVSLLSTVGLYFFTSF), and 792-811 (AQYFALLPSYICTLQCYAFC). N-linked (GlcNAc...) asparagine glycosylation is present at Asn-837. 2 helical membrane-spanning segments follow: residues 892–912 (VSVWMVANVVLAMAVSEVYGV) and 919–939 (VYLAIILWSVAVLAIIRAIGS). Asn-967, Asn-980, Asn-989, and Asn-995 each carry an N-linked (GlcNAc...) asparagine glycan.

It belongs to the chitin synthase family. Class II subfamily. In terms of tissue distribution, mainly expressed in the metulae, phialides, and conidia.

The protein localises to the cell membrane. Its subcellular location is the cell septum. It carries out the reaction [(1-&gt;4)-N-acetyl-beta-D-glucosaminyl](n) + UDP-N-acetyl-alpha-D-glucosamine = [(1-&gt;4)-N-acetyl-beta-D-glucosaminyl](n+1) + UDP + H(+). In terms of biological role, polymerizes chitin, a structural polymer of the cell wall and septum, by transferring the sugar moiety of UDP-GlcNAc to the non-reducing end of the growing chitin polymer. Seems not to be involved in hyphal growth, but, with chsC, chsA shares critical functions in hyphal wall integrity and differentiation. ChsA and chsC share also overlapping roles in septum formation. Invoved in the production of the asexual spores (conidia) that are formed by differentiated aerial hyphae called conidiophores. In Emericella nidulans (strain FGSC A4 / ATCC 38163 / CBS 112.46 / NRRL 194 / M139) (Aspergillus nidulans), this protein is Chitin synthase A.